Consider the following 298-residue polypeptide: Acetylglutamate kinase (298 aa).

Substrate is bound by residues 66–67 (GG), Arg88, and Asn193.

It belongs to the acetylglutamate kinase family. ArgB subfamily.

Its subcellular location is the cytoplasm. It carries out the reaction N-acetyl-L-glutamate + ATP = N-acetyl-L-glutamyl 5-phosphate + ADP. Its pathway is amino-acid biosynthesis; L-arginine biosynthesis; N(2)-acetyl-L-ornithine from L-glutamate: step 2/4. Its function is as follows. Catalyzes the ATP-dependent phosphorylation of N-acetyl-L-glutamate. This is Acetylglutamate kinase from Methanosphaera stadtmanae (strain ATCC 43021 / DSM 3091 / JCM 11832 / MCB-3).